The sequence spans 262 residues: Zinc-finger homeodomain protein 6 (262 aa).

Composition is skewed to basic and acidic residues over residues 1–25 and 36–47; these read MEVR…DHHR and NKEKPTTKRNGS. The disordered stretch occupies residues 1–93; that stretch reads MEVREKKDEK…ECQKNHAASS (93 aa). The ZF-HD dimerization-type; degenerate zinc finger occupies 82–131; the sequence is YRECQKNHAASSGGHVVDGCGEFMSSGEEGTVESLLCAACDCHRSFHRKE. The segment at residues 198 to 261 is a DNA-binding region (homeobox); the sequence is KKRFRTKFNE…NNKQAAKKKD (64 aa).

Homo- and heterodimer with other ZFHD proteins. Interacts with MIF1 and MIF3; these interactions prevent nuclear localization and DNA-binding to inhibit transcription regulation activity. Binds to ZHD1, ZHD2, ZHD10 and ZHD11. In terms of tissue distribution, expressed in seedlings, roots, leaves, stems, flowers and inflorescence.

Its subcellular location is the nucleus. In terms of biological role, putative transcription factor. This is Zinc-finger homeodomain protein 6 (ZHD6) from Arabidopsis thaliana (Mouse-ear cress).